Reading from the N-terminus, the 133-residue chain is Single-stranded DNA-binding protein 2 (133 aa).

One can recognise an SSB domain in the interval 1 to 103 (MNKTILIGRL…VVAEEVKFLE (103 aa)).

In terms of assembly, homotetramer.

The sequence is that of Single-stranded DNA-binding protein 2 (ssb2) from Clostridium acetobutylicum (strain ATCC 824 / DSM 792 / JCM 1419 / IAM 19013 / LMG 5710 / NBRC 13948 / NRRL B-527 / VKM B-1787 / 2291 / W).